The chain runs to 481 residues: tRNA pseudouridine(38/39) synthase (481 aa).

At alanine 2 the chain carries N-acetylalanine. Basic and acidic residues predominate over residues 29–41 (KKEQAKNKEDSNI). Residues 29–50 (KKEQAKNKEDSNIRENSAGAGK) form a disordered region. The Nucleophile role is filled by aspartate 118. Tyrosine 195 contributes to the substrate binding site. Residues threonine 456, threonine 466, and threonine 468 each carry the phosphothreonine modification.

It belongs to the tRNA pseudouridine synthase TruA family.

It localises to the nucleus. It carries out the reaction uridine(38/39) in tRNA = pseudouridine(38/39) in tRNA. Functionally, formation of pseudouridine at position 39 in the anticodon stem and loop of transfer RNAs. This is tRNA pseudouridine(38/39) synthase (PUS3) from Homo sapiens (Human).